The following is a 339-amino-acid chain: MIAKIEQLLKEVEALHASNAEELEALRIKYLSKKGAINDLMADFRNVAAEQKKEVGMRLNELKTKAQDKINALKEQFESQDNSCDGLDLTRSAYPIELGTRHPITIVKNEVIDIFARLGFSIAEGPEIEDDWHVFSALNFAEDHPARDMQDTFFIEAHPDVVLRTHTSSVQTRVMETSKPPIRIICPGRVYRNEAISYRAHCFFHQVEALYVDKNVSFTDLKQVLLLFAKEMFGTDTKIRLRPSYFPFTEPSAEMDISCNICGGKGCPFCKHTGWVEILGCGMVDPNVLESNGIDSKVYSGYALGMGIERITNLKYQVKDLRMFSENDTRFLKEFEAAY.

Glutamate 250 provides a ligand contact to Mg(2+).

The protein belongs to the class-II aminoacyl-tRNA synthetase family. Phe-tRNA synthetase alpha subunit type 1 subfamily. In terms of assembly, tetramer of two alpha and two beta subunits. Requires Mg(2+) as cofactor.

Its subcellular location is the cytoplasm. It carries out the reaction tRNA(Phe) + L-phenylalanine + ATP = L-phenylalanyl-tRNA(Phe) + AMP + diphosphate + H(+). The sequence is that of Phenylalanine--tRNA ligase alpha subunit from Bacteroides thetaiotaomicron (strain ATCC 29148 / DSM 2079 / JCM 5827 / CCUG 10774 / NCTC 10582 / VPI-5482 / E50).